The chain runs to 92 residues: UPF0223 protein SUB0967 (92 aa).

This sequence belongs to the UPF0223 family.

The protein is UPF0223 protein SUB0967 of Streptococcus uberis (strain ATCC BAA-854 / 0140J).